Reading from the N-terminus, the 508-residue chain is MGLPWYRVHTVVLNDPGRLLSVHIMHTALVAGWAGSMALYELAVFDPSDPVLDPMWRQGMFVIPFMTRLGITNSWGGWSITGGTVTNPGIWSYEGVAGAHIVFSGLCFLAAIWHWVYWDLEIFCDERTGKPSLDLPKIFGIHLFLSGVACFGFGAFHVTGLYGPGIWVSDPYGLTGKVQPVNPAWGVEGFDPFVPGGIASHHIAAGTLGILAGLFHLSVRPPQRLYKGLRMGNIETVLSSSIAAVFFAAFVVAGTMWYGSATTPIELFGPTRYQWDQGYFQQEIYRRVSAGLAENQSLSEAWSKIPEKLAFYDYIGNNPAKGGLFRAGSMDNGDGIAVGWLGHPIFRDKEGRELFVRRMPTFFETFPVVLVDGDGIVRADVPFRRAESKYSVEQVGVTVEFYGGELNGVSYSDPATVKKYARRAQLGEIFELDRATLKSDGVFRSSPRGWFTFGHASFALLFFFGHIWHGARTLFRDVFAGIDPDLDAQVEFGAFQKLGDPTTKRQAA.

A run of 6 helical transmembrane segments spans residues 21–36, 101–115, 140–156, 203–218, 237–252, and 457–472; these read SVHIMHTALVAGWAGS, IVFSGLCFLAAIWHW, GIHLFLSGVACFGFGAF, IAAGTLGILAGLFHLS, VLSSSIAAVFFAAFVV, and SFALLFFFGHIWHGAR.

Belongs to the PsbB/PsbC family. PsbB subfamily. In terms of assembly, PSII is composed of 1 copy each of membrane proteins PsbA, PsbB, PsbC, PsbD, PsbE, PsbF, PsbH, PsbI, PsbJ, PsbK, PsbL, PsbM, PsbT, PsbX, PsbY, PsbZ, Psb30/Ycf12, at least 3 peripheral proteins of the oxygen-evolving complex and a large number of cofactors. It forms dimeric complexes. Requires Binds multiple chlorophylls. PSII binds additional chlorophylls, carotenoids and specific lipids. as cofactor.

It localises to the plastid. The protein localises to the chloroplast thylakoid membrane. Its function is as follows. One of the components of the core complex of photosystem II (PSII). It binds chlorophyll and helps catalyze the primary light-induced photochemical processes of PSII. PSII is a light-driven water:plastoquinone oxidoreductase, using light energy to abstract electrons from H(2)O, generating O(2) and a proton gradient subsequently used for ATP formation. This chain is Photosystem II CP47 reaction center protein, found in Atropa belladonna (Belladonna).